A 62-amino-acid polypeptide reads, in one-letter code: Large ribosomal subunit protein uL29 (62 aa).

This sequence belongs to the universal ribosomal protein uL29 family.

The chain is Large ribosomal subunit protein uL29 from Desulfosudis oleivorans (strain DSM 6200 / JCM 39069 / Hxd3) (Desulfococcus oleovorans).